A 171-amino-acid polypeptide reads, in one-letter code: 3-hydroxydecanoyl-[acyl-carrier-protein] dehydratase (171 aa).

Histidine 70 is an active-site residue.

The protein belongs to the thioester dehydratase family. FabA subfamily. In terms of assembly, homodimer.

The protein resides in the cytoplasm. The enzyme catalyses a (3R)-hydroxyacyl-[ACP] = a (2E)-enoyl-[ACP] + H2O. It carries out the reaction (3R)-hydroxydecanoyl-[ACP] = (2E)-decenoyl-[ACP] + H2O. It catalyses the reaction (2E)-decenoyl-[ACP] = (3Z)-decenoyl-[ACP]. The protein operates within lipid metabolism; fatty acid biosynthesis. Functionally, necessary for the introduction of cis unsaturation into fatty acids. Catalyzes the dehydration of (3R)-3-hydroxydecanoyl-ACP to E-(2)-decenoyl-ACP and then its isomerization to Z-(3)-decenoyl-ACP. Can catalyze the dehydratase reaction for beta-hydroxyacyl-ACPs with saturated chain lengths up to 16:0, being most active on intermediate chain length. The chain is 3-hydroxydecanoyl-[acyl-carrier-protein] dehydratase from Pseudomonas putida (strain ATCC 700007 / DSM 6899 / JCM 31910 / BCRC 17059 / LMG 24140 / F1).